The sequence spans 206 residues: Large ribosomal subunit protein uL4 (206 aa).

The interval 48–97 (THAVKNRSLVSGGGKKPWKQKHTGRARQGSTRASQWVGGGKAMGPKPRDY) is disordered. Over residues 63 to 72 (KPWKQKHTGR) the composition is skewed to basic residues.

This sequence belongs to the universal ribosomal protein uL4 family. In terms of assembly, part of the 50S ribosomal subunit.

In terms of biological role, one of the primary rRNA binding proteins, this protein initially binds near the 5'-end of the 23S rRNA. It is important during the early stages of 50S assembly. It makes multiple contacts with different domains of the 23S rRNA in the assembled 50S subunit and ribosome. Its function is as follows. Forms part of the polypeptide exit tunnel. This is Large ribosomal subunit protein uL4 from Anaeromyxobacter dehalogenans (strain 2CP-C).